We begin with the raw amino-acid sequence, 441 residues long: MSKNDSIAIIGGGLAGCEAAWQLLNKGHSVTLYEMKPVNFSPAHRSSHLAELVCSNSLRSNIIENAAGTLKEEMRRMNSLIMSAADATSVPAGRALAVDRRAFSKFIEKKLKEFPKLTIIHQEITDIPADGLVIIATGPLTSDSLSQSIAGITGNSYLYFYDAISPVIEADSIDYEKVFRASRYDDDGQGDYLNCSMGKEEYELFWKTLTEGQTVSLRDFEDYKYFEGCLPIEVIAGRGVSTLLFGPMKPVGIVDPKTGKQPYAVIQLRQENREATLFNIVGFQTKLTWTEQRRIFRMIPGLGNAEFARYGSIHRNTFINSPALLEKTLQLKTAEHIFFAGQITGVEGYIESTAMGLMAGLSVSEFHKGKSFLPPPPETAMGALLNHITDTDSKQFQPMNINWGLVSPLPGKVKKRERGERYAHRALESLARWQSETSAEH.

Residue 11–16 participates in FAD binding; that stretch reads GGGLAG.

Belongs to the MnmG family. TrmFO subfamily. The cofactor is FAD.

The protein resides in the cytoplasm. The catalysed reaction is uridine(54) in tRNA + (6R)-5,10-methylene-5,6,7,8-tetrahydrofolate + NADH + H(+) = 5-methyluridine(54) in tRNA + (6S)-5,6,7,8-tetrahydrofolate + NAD(+). The enzyme catalyses uridine(54) in tRNA + (6R)-5,10-methylene-5,6,7,8-tetrahydrofolate + NADPH + H(+) = 5-methyluridine(54) in tRNA + (6S)-5,6,7,8-tetrahydrofolate + NADP(+). Catalyzes the folate-dependent formation of 5-methyl-uridine at position 54 (M-5-U54) in all tRNAs. The chain is Methylenetetrahydrofolate--tRNA-(uracil-5-)-methyltransferase TrmFO from Syntrophus aciditrophicus (strain SB).